We begin with the raw amino-acid sequence, 336 residues long: CST complex subunit STN1 (336 aa).

The segment at residues Val-49–Val-126 is a DNA-binding region (OB). Winged helix-turn-helix (wHTH) regions lie at residues Gln-162–Asp-263 and His-264–Phe-336.

This sequence belongs to the CTC1 family. In terms of assembly, component of the CST complex.

The protein resides in the nucleus. It is found in the chromosome. It localises to the telomere. Component of the CST complex proposed to act as a specialized replication factor promoting DNA replication under conditions of replication stress or natural replication barriers such as the telomere duplex. The CST complex binds single-stranded DNA with high affinity in a sequence-independent manner, while isolated subunits bind DNA with low affinity by themselves. Initially the CST complex has been proposed to protect telomeres from DNA degradation. However, the CST complex has been shown to be involved in several aspects of telomere replication. The chain is CST complex subunit STN1 from Aquarana catesbeiana (American bullfrog).